Consider the following 478-residue polypeptide: Puromycin-sensitive aminopeptidase-like protein (478 aa).

Substrate is bound by residues Glu-180 and 316–320 (GAMEN). His-352 is a binding site for Zn(2+). Residue Glu-353 is the Proton acceptor of the active site. Zn(2+) is bound by residues His-356 and Glu-375.

The protein belongs to the peptidase M1 family. It depends on Zn(2+) as a cofactor.

In terms of biological role, aminopeptidase with broad substrate specificity to several peptides. In Homo sapiens (Human), this protein is Puromycin-sensitive aminopeptidase-like protein (NPEPPSL1).